Reading from the N-terminus, the 95-residue chain is Protein RnfH (95 aa).

This sequence belongs to the UPF0125 (RnfH) family.

The sequence is that of Protein RnfH from Methylococcus capsulatus (strain ATCC 33009 / NCIMB 11132 / Bath).